A 183-amino-acid chain; its full sequence is Transmembrane and coiled-coil domain-containing protein 2 (183 aa).

A helical transmembrane segment spans residues 54–74 (VQIILGISFLTLLAIGLFALW). A coiled-coil region spans residues 127-150 (GLQEKILKKLQMVENKVRDLEGII).

The protein localises to the membrane. This chain is Transmembrane and coiled-coil domain-containing protein 2 (Tmco2), found in Mus musculus (Mouse).